The sequence spans 469 residues: ATP synthase subunit beta (469 aa).

156 to 163 (GGAGVGKT) is an ATP binding site.

Belongs to the ATPase alpha/beta chains family. As to quaternary structure, F-type ATPases have 2 components, CF(1) - the catalytic core - and CF(0) - the membrane proton channel. CF(1) has five subunits: alpha(3), beta(3), gamma(1), delta(1), epsilon(1). CF(0) has three main subunits: a(1), b(2) and c(9-12). The alpha and beta chains form an alternating ring which encloses part of the gamma chain. CF(1) is attached to CF(0) by a central stalk formed by the gamma and epsilon chains, while a peripheral stalk is formed by the delta and b chains.

The protein localises to the cell membrane. It catalyses the reaction ATP + H2O + 4 H(+)(in) = ADP + phosphate + 5 H(+)(out). Functionally, produces ATP from ADP in the presence of a proton gradient across the membrane. The catalytic sites are hosted primarily by the beta subunits. In Bacillus cereus (strain AH820), this protein is ATP synthase subunit beta.